The chain runs to 36 residues: Cecropin-D (36 aa).

K36 is modified (lysine amide).

This sequence belongs to the cecropin family.

The protein localises to the secreted. In terms of biological role, cecropins have lytic and antibacterial activity against several Gram-positive and Gram-negative bacteria. This Antheraea pernyi (Chinese oak silk moth) protein is Cecropin-D.